The sequence spans 264 residues: S-adenosylmethionine decarboxylase proenzyme (264 aa).

The active-site Schiff-base intermediate with substrate; via pyruvic acid is Ser113. Position 113 is a pyruvic acid (Ser); by autocatalysis (Ser113). His118 serves as the catalytic Proton acceptor; for processing activity. Residue Cys141 is the Proton donor; for catalytic activity of the active site.

This sequence belongs to the prokaryotic AdoMetDC family. Type 2 subfamily. As to quaternary structure, heterooctamer of four alpha and four beta chains arranged as a tetramer of alpha/beta heterodimers. Pyruvate serves as cofactor. Post-translationally, is synthesized initially as an inactive proenzyme. Formation of the active enzyme involves a self-maturation process in which the active site pyruvoyl group is generated from an internal serine residue via an autocatalytic post-translational modification. Two non-identical subunits are generated from the proenzyme in this reaction, and the pyruvate is formed at the N-terminus of the alpha chain, which is derived from the carboxyl end of the proenzyme. The post-translation cleavage follows an unusual pathway, termed non-hydrolytic serinolysis, in which the side chain hydroxyl group of the serine supplies its oxygen atom to form the C-terminus of the beta chain, while the remainder of the serine residue undergoes an oxidative deamination to produce ammonia and the pyruvoyl group blocking the N-terminus of the alpha chain.

It catalyses the reaction S-adenosyl-L-methionine + H(+) = S-adenosyl 3-(methylsulfanyl)propylamine + CO2. Its pathway is amine and polyamine biosynthesis; S-adenosylmethioninamine biosynthesis; S-adenosylmethioninamine from S-adenosyl-L-methionine: step 1/1. Catalyzes the decarboxylation of S-adenosylmethionine to S-adenosylmethioninamine (dcAdoMet), the propylamine donor required for the synthesis of the polyamines spermine and spermidine from the diamine putrescine. This is S-adenosylmethionine decarboxylase proenzyme from Stenotrophomonas maltophilia (strain K279a).